Reading from the N-terminus, the 131-residue chain is Glycine cleavage system H protein (131 aa).

In terms of domain architecture, Lipoyl-binding spans 24-106 (RVTVGISDHA…YGEGWIFVVE (83 aa)). Position 65 is an N6-lipoyllysine (K65).

This sequence belongs to the GcvH family. The glycine cleavage system is composed of four proteins: P, T, L and H. (R)-lipoate serves as cofactor.

Its function is as follows. The glycine cleavage system catalyzes the degradation of glycine. The H protein shuttles the methylamine group of glycine from the P protein to the T protein. In Xanthomonas euvesicatoria pv. vesicatoria (strain 85-10) (Xanthomonas campestris pv. vesicatoria), this protein is Glycine cleavage system H protein.